Reading from the N-terminus, the 567-residue chain is DNA ligase (567 aa).

Residue Glu246 coordinates ATP. Catalysis depends on Lys248, which acts as the N6-AMP-lysine intermediate. The ATP site is built by Arg253, Arg268, Glu298, Phe339, Arg415, and Lys421.

It belongs to the ATP-dependent DNA ligase family. Mg(2+) serves as cofactor.

The catalysed reaction is ATP + (deoxyribonucleotide)n-3'-hydroxyl + 5'-phospho-(deoxyribonucleotide)m = (deoxyribonucleotide)n+m + AMP + diphosphate.. Functionally, DNA ligase that seals nicks in double-stranded DNA during DNA replication, DNA recombination and DNA repair. This Nanoarchaeum equitans (strain Kin4-M) protein is DNA ligase.